The following is a 202-amino-acid chain: Securin-2 (202 aa).

The disordered stretch occupies residues 60 to 105; sequence TRKALGTVNRATEKSVKTNGPRKQKQPSFSAKKMTEKTVKTKSSVP. A D-box motif is present at residues 61–64; the sequence is RKAL. The SH3-binding signature appears at 163–173; that stretch reads PPSPVKMPSPP.

It belongs to the securin family. Expressed at low levels in the pituitary, liver, spleen, prostate, testis, ovary, small intestine and colon. Also expressed in various pituitary, testicular, liver and ovarian tumors.

The protein resides in the cytoplasm. Its subcellular location is the nucleus. The sequence is that of Securin-2 (PTTG2) from Homo sapiens (Human).